A 1285-amino-acid chain; its full sequence is Protein crumbs homolog 2 (1285 aa).

The first 28 residues, 1–28, serve as a signal peptide directing secretion; sequence MALARPGTPDPQALASVLLLLLWAPALS. The segment at 1–350 is required for maximum inhibition of APP amyloid-beta peptide secretion; that stretch reads MALARPGTPD…GFQCHCPDGY (350 aa). Residues 67–106 enclose the EGF-like 1 domain; sequence EPRGCATQPCHHGALCVPQGPDPTGFRCYCVPGFQGPRCE. Disulfide bonds link C71–C82, C76–C94, C96–C105, C112–C123, C117–C132, C134–C143, C150–C161, C155–C170, C172–C181, C188–C199, C193–C208, C210–C220, C227–C238, C232–C247, C249–C258, C265–C276, C270–C306, C308–C317, C324–C335, C329–C344, C346–C355, C362–C373, C367–C382, C384–C393, C400–C411, C405–C424, and C426–C435. Residues 108–144 form the EGF-like 2; calcium-binding domain; that stretch reads DIDECASRPCHHGATCRNLADRYECHCPLGYAGVTCE. One can recognise an EGF-like 3; calcium-binding domain in the interval 146-182; it reads EVDECASAPCLHGGSCLDGVGSFRCVCAPGYGGTRCQ. In terms of domain architecture, EGF-like 4; calcium-binding spans 184-221; the sequence is DLDECQSQPCAHGGTCHDLVNGFRCDCAGTGYEGTHCE. EGF-like domains lie at 223-259 and 261-318; these read EVLE…ELCE and DEDE…ADCG. N-linked (GlcNAc...) asparagine glycosylation occurs at N235. Residue S267 is glycosylated (O-linked (Glc...) serine). The EGF-like 7; calcium-binding domain maps to 320-356; the sequence is EVDECASRPCLNGGHCQDLPNGFQCHCPDGYAGPTCE. Positions 358–394 constitute an EGF-like 8; calcium-binding domain; sequence DVDECLSDPCLHGGTCSDTVAGYICRCPETWGGRDCS. Residues 396-436 form the EGF-like 9 domain; it reads QLTGCQGHTCPLAATCIPIFESGVHSYVCHCPPGTHGPFCG. Residues 431–603 form the Laminin G-like 1 domain; sequence HGPFCGQNTT…DLGENVLLGC (173 aa). Residues N438 and N478 are each glycosylated (N-linked (GlcNAc...) asparagine). 4 disulfide bridges follow: C579-C603, C609-C620, C614-C629, and C631-C640. Residues 605–641 enclose the EGF-like 10 domain; the sequence is RREQCRPLPCVHGGSCVDLWTHFRCDCARPHRGPTCA. The region spanning 647 to 805 is the Laminin G-like 2 domain; sequence ATFGLGGAPS…RQSWNLTAGC (159 aa). N-linked (GlcNAc...) asparagine glycosylation is found at N669, N690, N786, and N800. Intrachain disulfides connect C766-C805, C811-C822, C816-C831, and C833-C842. In terms of domain architecture, EGF-like 11 spans 807–843; sequence SEDMCSPDPCFNGGTCLVTWNDFHCTCPANFTGPTCA. Residues N836, N886, N926, and N1009 are each glycosylated (N-linked (GlcNAc...) asparagine). One can recognise a Laminin G-like 3 domain in the interval 871 to 1054; the sequence is EATFREGPPA…PGTPAPILGC (184 aa). 13 disulfides stabilise this stretch: C1013-C1054, C1060-C1071, C1065-C1080, C1082-C1091, C1098-C1108, C1103-C1118, C1120-C1129, C1138-C1150, C1144-C1159, C1161-C1170, C1177-C1188, C1182-C1197, and C1199-C1208. EGF-like domains follow at residues 1056–1092, 1094–1130, 1134–1171, and 1173–1209; these read GAPV…PRCE, HVDP…PRCR, PSKE…QRCQ, and PTLP…QFCE. 2 N-linked (GlcNAc...) asparagine glycosylation sites follow: N1141 and N1158. A helical transmembrane segment spans residues 1225 to 1245; it reads VAVPAACACLLLLLLGLLSGI. The tract at residues 1249-1285 is interaction with EPB41L5; it reads RKRRQSEGTYSPSQQEVAGARLEMDSVLKVPPEERLI.

This sequence belongs to the Crumbs protein family. In terms of assembly, associates with the gamma-secretase complex via interaction (via the transmembrane domain) with PSEN1/PS1. Interacts (via intracellular domain) with EPB41L5. Interacts with PALS1. In terms of processing, O-glucosylated by POGLUT1 at Ser-267; consists of an O-glucose trisaccharide, in which the O-glucose is elongated by the addition of two xylose residues. O-glucosylation is required for localization at the plasma membrane. Post-translationally, N-glycosylated. As to expression, expressed in glomeruli, podocytes of the glomerular capillary loops, and parietal glomerular epithelial cells in the kidney (at protein level). Expressed in retina, fetal eye and brain. Also expressed in kidney, RPE/choroid, and at low levels in lung, placenta, and heart.

It is found in the apical cell membrane. The protein localises to the cytoplasm. Its subcellular location is the cell junction. It localises to the secreted. In terms of biological role, apical polarity protein that plays a central role during the epithelial-to-mesenchymal transition (EMT) at gastrulation, when newly specified mesodermal cells move inside the embryo. Acts by promoting cell ingression, the process by which cells leave the epithelial epiblast and move inside the embryo to form a new tissue layer. The anisotropic distribution of CRB2 and MYH10/myosin-IIB at cell edges define which cells will ingress: cells with high apical CRB2 are probably extruded from the epiblast by neighboring cells with high levels of apical MYH10/myosin-IIB. Plays a role in the maintenance of retinal neuroepithelium organization, structural integrity, adhesion, photoreceptor polarity and retinal photoreceptor layer thickness. May play a role in determining the length of cone photoreceptor outer segments and proliferation of late-born progenitor cells. Also required for maintenance of the apical polarity complex during development of the cortex. Inhibits gamma-secretase-dependent cleavage of APP and secretion of amyloid-beta peptide 40 and amyloid-beta peptide 42, and thereby inhibits gamma-secretase-dependent Notch transcription. In Homo sapiens (Human), this protein is Protein crumbs homolog 2.